Consider the following 257-residue polypeptide: Exosome complex component mtr3 (257 aa).

It belongs to the RNase PH family. As to quaternary structure, component of the RNA exosome complex. Specifically part of the catalytically inactive RNA exosome core complex (Exo-9) may associate with the catalytic subunits rrp6 and dis3 in cytoplasmic- and nuclear-specific RNA exosome complex forms. Exo-9 is formed by a hexameric base ring of RNase PH domain-containing subunits and a cap ring consisting of csl4, rrp4 and rrp40.

The protein localises to the cytoplasm. Its subcellular location is the nucleus. It is found in the nucleolus. Its function is as follows. Non-catalytic component of the RNA exosome complex which has 3'-&gt;5' exoribonuclease activity and participates in a multitude of cellular RNA processing and degradation events. In the nucleus, the RNA exosome complex is involved in proper maturation of stable RNA species such as rRNA, snRNA and snoRNA, in the elimination of RNA processing by-products and non-coding 'pervasive' transcripts, such as antisense RNA species and cryptic unstable transcripts (CUTs), and of mRNAs with processing defects, thereby limiting or excluding their export to the cytoplasm. In the cytoplasm, the RNA exosome complex is involved in general mRNA turnover and in RNA surveillance pathways, preventing translation of aberrant mRNAs. The catalytic inactive RNA exosome core complex of 9 subunits (Exo-9) is proposed to play a pivotal role in the binding and presentation of RNA for ribonucleolysis, and to serve as a scaffold for the association with catalytic subunits and accessory proteins or complexes. ski6 is part of the hexameric ring of RNase PH domain-containing subunits proposed to form a central channel which threads RNA substrates for degradation. This Schizosaccharomyces pombe (strain 972 / ATCC 24843) (Fission yeast) protein is Exosome complex component mtr3 (mtr3).